Consider the following 406-residue polypeptide: LIM/homeobox protein Lhx2 (406 aa).

2 consecutive LIM zinc-binding domains span residues Cys53–Asp105 and Cys115–His168. Residues Asp250–Arg270 are disordered. Positions Thr266 to Leu325 form a DNA-binding region, homeobox. Positions Lys307–Arg323 match the Nuclear localization signal motif. Polar residues predominate over residues Gln328–Ala356. 2 disordered regions span residues Gln328 to Thr374 and Gly387 to Phe406. A compositionally biased stretch (low complexity) spans Ser357–Thr374. Polar residues predominate over residues Ser396–Phe406.

As to quaternary structure, interacts (via LIM domains) with CITED2. Interacts with POU4F2.

Its subcellular location is the nucleus. Functionally, acts as a transcriptional activator. Stimulates the promoter of the alpha-glycoprotein gene. Transcriptional regulatory protein involved in the control of cell differentiation in developing lymphoid and neural cell types. The chain is LIM/homeobox protein Lhx2 (LHX2) from Homo sapiens (Human).